The chain runs to 137 residues: MMVSICEQKLQHFSAVFLLILCLGMMSAAPPPDPSLDNEWKEWKTKFAKAYNLNEERHRRLVWEENKKKIEAHNADYEQGKTSFYMGLNQFSDLTPEEFKTNCYGNSLNRGEMAPDLPEYEDLGKNSYLTPGRAQPE.

The signal sequence occupies residues 1–27; the sequence is MMVSICEQKLQHFSAVFLLILCLGMMS. Tandem repeats lie at residues 39–41 and 42–44. Positions 39–44 are 2 X 3 AA tandem repeats of E-W-K; sequence EWKEWK. A disordered region spans residues 114-137; the sequence is APDLPEYEDLGKNSYLTPGRAQPE.

This sequence to the propeptide regions of cysteine proteases.

It is found in the secreted. Functionally, not known, expressed in activated T-cell. The chain is Protein CTLA-2-alpha (Ctla2a) from Mus musculus (Mouse).